The primary structure comprises 122 residues: Lithostathine (122 aa).

The N-terminal stretch at 1 to 26 (MLPSMSLPSLXWMLLSCLMLLSQVQG) is a signal peptide. Positions 27–37 (EDSPADTPSAR) are excised as a propeptide. Positions 38-122 (ISCPKGSMAY…LEPNAGGWEW (85 aa)) constitute a C-type lectin domain. The cysteines at positions 40 and 51 are disulfide-linked.

As to quaternary structure, cleaved to give an A chain and a B chain joined by a disulfide bond. In terms of tissue distribution, in pancreatic acinar cells.

Its subcellular location is the secreted. Its function is as follows. Might act as an inhibitor of spontaneous calcium carbonate precipitation. The sequence is that of Lithostathine (PTP) from Sus scrofa (Pig).